A 577-amino-acid polypeptide reads, in one-letter code: Proline--tRNA ligase (577 aa).

Belongs to the class-II aminoacyl-tRNA synthetase family. ProS type 1 subfamily. As to quaternary structure, homodimer.

Its subcellular location is the cytoplasm. The catalysed reaction is tRNA(Pro) + L-proline + ATP = L-prolyl-tRNA(Pro) + AMP + diphosphate. In terms of biological role, catalyzes the attachment of proline to tRNA(Pro) in a two-step reaction: proline is first activated by ATP to form Pro-AMP and then transferred to the acceptor end of tRNA(Pro). As ProRS can inadvertently accommodate and process non-cognate amino acids such as alanine and cysteine, to avoid such errors it has two additional distinct editing activities against alanine. One activity is designated as 'pretransfer' editing and involves the tRNA(Pro)-independent hydrolysis of activated Ala-AMP. The other activity is designated 'posttransfer' editing and involves deacylation of mischarged Ala-tRNA(Pro). The misacylated Cys-tRNA(Pro) is not edited by ProRS. The sequence is that of Proline--tRNA ligase from Thermotoga sp. (strain RQ2).